Reading from the N-terminus, the 356-residue chain is MATITNNPDKEKALNLVLNQIERSFGKGSIMRLGDAARMRVETIPSGALTLDLALGGGLPKGRVIEIYGPESSGKTTLALHAIAEVQKAGGVAAFVDAEHALDPTYSEVLGVDIHNLLVAQPDTGESALEIVDQLVRSAAVDIVVVDSVAALVPRAEIEGEMGDNQVGLQARLMSKALRKIAGNIGKSGCVVIFLNQLRQKIGVTYGSPEVTTGGTALKFYASVRLDIRRIQTLKKGSEGEYGIRAKVKVAKNKVAPPFRIAEFDIIFGKGISQMGCMIDMAEHTDVITRKGAWYSYNGENIAQGRDNAVKYLEENLDVAAIIEKQVREKLDIASLSFAGSGNDDEEEFEAVEAEE.

69-76 (GPESSGKT) is a binding site for ATP.

The protein belongs to the RecA family.

The protein localises to the cytoplasm. Functionally, can catalyze the hydrolysis of ATP in the presence of single-stranded DNA, the ATP-dependent uptake of single-stranded DNA by duplex DNA, and the ATP-dependent hybridization of homologous single-stranded DNAs. It interacts with LexA causing its activation and leading to its autocatalytic cleavage. The sequence is that of Protein RecA from Gloeothece citriformis (strain PCC 7424) (Cyanothece sp. (strain PCC 7424)).